The primary structure comprises 299 residues: Deoxyhypusine hydroxylase (299 aa).

HEAT-like PBS-type repeat units follow at residues 54–80 (LKHELAFCLGQMRDRAAIPALLGVLQD), 87–113 (VRHEAGEALGAIGDPEVLDVLRRYSED), 174–200 (DRYRAMFALRNLGGRDAVLALADGLRA), 205–231 (FRHEIGYVLGQMQDEACVPQLTAALRS), and 238–264 (VRHECAEALGSIARPSCLETLRAFAQD). The Fe cation site is built by His-56, His-89, and Glu-90. Positions 207, 240, and 241 each coordinate Fe cation.

Belongs to the deoxyhypusine hydroxylase family. It depends on Fe(2+) as a cofactor.

The catalysed reaction is [eIF5A protein]-deoxyhypusine + AH2 + O2 = [eIF5A protein]-hypusine + A + H2O. It participates in protein modification; eIF5A hypusination. Catalyzes the hydroxylation of the N(6)-(4-aminobutyl)-L-lysine intermediate produced by deoxyhypusine synthase/DHPS on a critical lysine of the eukaryotic translation initiation factor 5A/eIF-5A. This is the second step of the post-translational modification of that lysine into an unusual amino acid residue named hypusine. Hypusination is unique to mature eIF-5A factor and is essential for its function. The protein is Deoxyhypusine hydroxylase of Gallus gallus (Chicken).